The primary structure comprises 376 residues: Erythronate-4-phosphate dehydrogenase (376 aa).

2 residues coordinate substrate: Ser-45 and Thr-67. Residues Asp-147, 209–211, and Asp-235 each bind NAD(+); that span reads ASR. Arg-211 is a catalytic residue. Glu-240 is a catalytic residue. His-257 functions as the Proton donor in the catalytic mechanism. Gly-260 contacts NAD(+). Tyr-261 serves as a coordination point for substrate.

This sequence belongs to the D-isomer specific 2-hydroxyacid dehydrogenase family. PdxB subfamily. In terms of assembly, homodimer.

The protein resides in the cytoplasm. It carries out the reaction 4-phospho-D-erythronate + NAD(+) = (R)-3-hydroxy-2-oxo-4-phosphooxybutanoate + NADH + H(+). The protein operates within cofactor biosynthesis; pyridoxine 5'-phosphate biosynthesis; pyridoxine 5'-phosphate from D-erythrose 4-phosphate: step 2/5. Functionally, catalyzes the oxidation of erythronate-4-phosphate to 3-hydroxy-2-oxo-4-phosphonooxybutanoate. This Aeromonas hydrophila subsp. hydrophila (strain ATCC 7966 / DSM 30187 / BCRC 13018 / CCUG 14551 / JCM 1027 / KCTC 2358 / NCIMB 9240 / NCTC 8049) protein is Erythronate-4-phosphate dehydrogenase.